The primary structure comprises 293 residues: Kynurenine formamidase (293 aa).

Positions 84–88 (HGGYW) match the HGGXW motif. Catalysis depends on Ser153, which acts as the Nucleophile. Residues Asp236 and His268 contribute to the active site.

This sequence belongs to the kynurenine formamidase family. As to quaternary structure, homodimer.

It localises to the cytoplasm. The protein resides in the cytosol. It is found in the nucleus. It carries out the reaction N-formyl-L-kynurenine + H2O = L-kynurenine + formate + H(+). Its pathway is amino-acid degradation; L-tryptophan degradation via kynurenine pathway; L-kynurenine from L-tryptophan: step 2/2. Catalyzes the hydrolysis of N-formyl-L-kynurenine to L-kynurenine, the second step in the kynurenine pathway of tryptophan degradation. Kynurenine may be further oxidized to nicotinic acid, NAD(H) and NADP(H). Required for elimination of toxic metabolites. The protein is Kynurenine formamidase (afmid) of Danio rerio (Zebrafish).